The chain runs to 106 residues: NADH-quinone oxidoreductase subunit K (106 aa).

3 helical membrane passes run 10-30 (VTYI…GVLI), 34-54 (IVII…VFVT), and 67-87 (IVFF…ALVI).

This sequence belongs to the complex I subunit 4L family. NDH-1 is composed of 14 different subunits. Subunits NuoA, H, J, K, L, M, N constitute the membrane sector of the complex.

It localises to the cell inner membrane. The enzyme catalyses a quinone + NADH + 5 H(+)(in) = a quinol + NAD(+) + 4 H(+)(out). In terms of biological role, NDH-1 shuttles electrons from NADH, via FMN and iron-sulfur (Fe-S) centers, to quinones in the respiratory chain. The immediate electron acceptor for the enzyme in this species is believed to be ubiquinone. Couples the redox reaction to proton translocation (for every two electrons transferred, four hydrogen ions are translocated across the cytoplasmic membrane), and thus conserves the redox energy in a proton gradient. The sequence is that of NADH-quinone oxidoreductase subunit K from Leptospira biflexa serovar Patoc (strain Patoc 1 / Ames).